Reading from the N-terminus, the 40-residue chain is MTITPSLQGFFYSILFGAIVLGLLGGGFIFFSQKDKIVRR.

The helical transmembrane segment at 10 to 30 (FFYSILFGAIVLGLLGGGFIF) threads the bilayer.

The protein belongs to the PsbX family. Type 1 subfamily. As to quaternary structure, PSII is composed of 1 copy each of membrane proteins PsbA, PsbB, PsbC, PsbD, PsbE, PsbF, PsbH, PsbI, PsbJ, PsbK, PsbL, PsbM, PsbT, PsbX, PsbY, PsbZ, Psb30/Ycf12, peripheral proteins PsbO, CyanoQ (PsbQ), PsbU, PsbV and a large number of cofactors. It forms dimeric complexes.

Its subcellular location is the cellular thylakoid membrane. Involved in the binding and/or turnover of quinones at the Q(B) site of photosystem II (PSII). PSII is a light-driven water plastoquinone oxidoreductase, using light energy to abstract electrons from H(2)O, generating a proton gradient subsequently used for ATP formation. This Acaryochloris marina (strain MBIC 11017) protein is Photosystem II reaction center protein X.